Here is a 696-residue protein sequence, read N- to C-terminus: Serine/threonine-protein kinase sck1 (696 aa).

2 disordered regions span residues 1–59 (MTEI…YDPV) and 77–118 (HKEQ…TPPS). Residues 11 to 37 (SSNSENTNQASPSTIQSHSTQPVLSND) are compositionally biased toward polar residues. 2 stretches are compositionally biased toward basic and acidic residues: residues 38–49 (HSTKVNDYEGKE) and 77–88 (HKEQSLKEDKES). A C2 domain is found at 122 to 272 (IRHDTVVPKD…VQEAWYKLEP (151 aa)). Positions 302–563 (FTALRLIGKG…TTELKEHPFF (262 aa)) constitute a Protein kinase domain. Residues 308-316 (IGKGTFGQV) and K331 contribute to the ATP site. Residue D428 is the Proton acceptor of the active site. The region spanning 564 to 643 (ADINWDLLSK…VNKSIDEQFQ (80 aa)) is the AGC-kinase C-terminal domain. A Phosphothreonine modification is found at T632. S665 bears the Phosphoserine mark.

Belongs to the protein kinase superfamily. AGC Ser/Thr protein kinase family. cAMP subfamily.

It carries out the reaction L-seryl-[protein] + ATP = O-phospho-L-seryl-[protein] + ADP + H(+). It catalyses the reaction L-threonyl-[protein] + ATP = O-phospho-L-threonyl-[protein] + ADP + H(+). Its function is as follows. Protein kinase that is part of growth control pathway which is at least partially redundant with the cAMP pathway. Required for trehalase activation. This is Serine/threonine-protein kinase sck1 (sck1) from Schizosaccharomyces pombe (strain 972 / ATCC 24843) (Fission yeast).